A 287-amino-acid polypeptide reads, in one-letter code: MAAGKEIRTQISSIKNTQKITSAMEMVAASKMKKAQDRMLASRPYCEKISNVIGHLAYAHSEFEYSYMNSSEKLQRIGVIIISSDRGLCGGLNTNLFRHILKQVVEYQAKSIEVDICTIGKKATSFFKNLGLNVKSVLTDLGDTPHFDDLLGTIKVMLDEFDADEIQQLSVAYNKFENIITQTPTIMQLVPMVAGESNNINHYWDYIYEPDAQEVLSALLVRYIEALVYQGLIENIACEQSSRMIAMKSATDNASDMVKELKLIYNKARQAAITQEISEIVSGAAAV.

It belongs to the ATPase gamma chain family. In terms of assembly, F-type ATPases have 2 components, CF(1) - the catalytic core - and CF(0) - the membrane proton channel. CF(1) has five subunits: alpha(3), beta(3), gamma(1), delta(1), epsilon(1). CF(0) has three main subunits: a, b and c.

It localises to the cell inner membrane. Its function is as follows. Produces ATP from ADP in the presence of a proton gradient across the membrane. The gamma chain is believed to be important in regulating ATPase activity and the flow of protons through the CF(0) complex. This is ATP synthase gamma chain from Ruthia magnifica subsp. Calyptogena magnifica.